The following is a 221-amino-acid chain: Protein myomaker (221 aa).

The Extracellular segment spans residues 1 to 3 (MGT). Residues 4-24 (LVAKLLLPTLSSLAFLPTVSI) form a helical membrane-spanning segment. The Cytoplasmic segment spans residues 25–34 (AAKRRFHMEA). Residues 35–55 (MVYLFTLFFVALHHACNGPGL) form a helical membrane-spanning segment. At 56 to 64 (SVLCFMRHD) the chain is on the extracellular side. The chain crosses the membrane as a helical span at residues 65–85 (ILEYFSVYGTALSMWVSLMAL). The Cytoplasmic portion of the chain corresponds to 86 to 92 (ADFDEPK). A helical transmembrane segment spans residues 93-110 (RSTFVMFGVLTIAVRIYH). Over 111–113 (DRW) the chain is Extracellular. The helical transmembrane segment at 114–134 (GYGVYSGPIGTAILIIAAKWL) threads the bilayer. The Cytoplasmic portion of the chain corresponds to 135–153 (QKMKEKKGLYPDKSVYTQQ). Residues 154–174 (IGPGLCFGALALMLRFFFEDW) traverse the membrane as a helical segment. A topological domain (extracellular) is located at residue Asp175. The helical transmembrane segment at 176-196 (YTYVHSFYHCALAMSFVLLLP) threads the bilayer. Residues 197–221 (KVNKKAGSPGTPAKLDCSTLCCACV) lie on the Cytoplasmic side of the membrane. S-palmitoyl cysteine attachment occurs at residues Cys217 and Cys218.

The protein belongs to the TMEM8 family. In terms of assembly, interacts with MYMX. Palmitoylated at the C-terminus; palmitoylation promotes localization to the Golgi apparatus.

Its subcellular location is the cell membrane. The protein localises to the golgi apparatus membrane. In terms of biological role, myoblast-specific protein that mediates myoblast fusion, an essential step for the formation of multi-nucleated muscle fibers. Actively participates in the membrane fusion reaction by mediating the mixing of cell membrane lipids (hemifusion) upstream of MYMX. Acts independently of MYMX. Involved in skeletal muscle regeneration in response to injury by mediating the fusion of satellite cells, a population of muscle stem cells, with injured myofibers. Also involved in skeletal muscle hypertrophy, probably by mediating the fusion of satellite cells with myofibers. This Homo sapiens (Human) protein is Protein myomaker.